We begin with the raw amino-acid sequence, 146 residues long: MKLHELKPAEGSRQVRNRVGRGTSSGNGKTAGRGQKGQKARSGGGVRLGFEGGQTPLFRRLPKRGFTNINRKDYAVVNLDTLNRFEDGTEVTPVVLKEAGIVKNEKAGIKVLADGELTKKLTVKAAKFSKSAQEAIEAAGGSIEVI.

The span at 1 to 10 (MKLHELKPAE) shows a compositional bias: basic and acidic residues. A disordered region spans residues 1–51 (MKLHELKPAEGSRQVRNRVGRGTSSGNGKTAGRGQKGQKARSGGGVRLGFE). Gly residues-rich tracts occupy residues 23–35 (TSSGNGKTAGRGQ) and 42–51 (SGGGVRLGFE).

The protein belongs to the universal ribosomal protein uL15 family. Part of the 50S ribosomal subunit.

In terms of biological role, binds to the 23S rRNA. This Enterococcus faecalis (strain ATCC 700802 / V583) protein is Large ribosomal subunit protein uL15.